The chain runs to 1282 residues: Cytokine receptor (1282 aa).

The first 23 residues, methionine 1 to alanine 23, serve as a signal peptide directing secretion. Topologically, residues isoleucine 24–alanine 889 are extracellular. N-linked (GlcNAc...) asparagine glycans are attached at residues asparagine 44, asparagine 86, asparagine 87, and asparagine 114. The cysteines at positions 47 and 106 are disulfide-linked. 7 Fibronectin type-III domains span residues proline 124–glutamate 220, proline 227–alanine 327, proline 329–aspartate 431, glutamate 436–aspartate 535, alanine 537–alanine 631, glutamine 635–glycine 735, and valine 736–threonine 836. A disulfide bridge links cysteine 132 with cysteine 142. 2 N-linked (GlcNAc...) asparagine glycosylation sites follow: asparagine 143 and asparagine 156. Cysteines 173 and 183 form a disulfide. N-linked (GlcNAc...) asparagine glycans are attached at residues asparagine 184, asparagine 230, asparagine 235, asparagine 278, asparagine 298, asparagine 310, asparagine 376, asparagine 448, and asparagine 466. Cysteines 472 and 482 form a disulfide. N-linked (GlcNAc...) asparagine glycans are attached at residues asparagine 568, asparagine 581, asparagine 626, asparagine 676, asparagine 703, asparagine 777, asparagine 790, and asparagine 862. The helical transmembrane segment at methionine 890–valine 910 threads the bilayer. At tyrosine 911–leucine 1282 the chain is on the cytoplasmic side. Residue serine 976 is modified to Phosphoserine. 2 disordered regions span residues threonine 989–serine 1092 and threonine 1238–arginine 1258. Composition is skewed to basic and acidic residues over residues valine 999 to glutamate 1009 and asparagine 1033 to glutamine 1064.

This sequence belongs to the type I cytokine receptor family. Interacts with wdp; the interaction promotes internalization of dome and its subsequent lysosomal degradation; thereby reducing JAK/STAT signaling. In terms of processing, undergoes lysosomal degradation. As to expression, in stage 11 embryos, tracheal pits show highest expression, at stage 14 high expression is detected in the posterior spiracles, gut and head.

The protein localises to the apicolateral cell membrane. In terms of biological role, critical for epithelial morphogenesis during oogenesis; border cell migration. Required in the germarium for the polarization of follicle cells during encapsulation of germline cells. Required for embryonic segmentation and trachea specification. Essential receptor molecule for upd and JAK/STAT signaling during oogenesis. The chain is Cytokine receptor (dome) from Drosophila melanogaster (Fruit fly).